The primary structure comprises 467 residues: Chromosomal replication initiator protein DnaA (467 aa).

The segment at 1–90 (MSLSLWQQCL…KPVTQTPQAA (90 aa)) is domain I, interacts with DnaA modulators. The interval 91 to 130 (VTSNVAAPALVAQTQPQRAAPSTRSGWDNVPAPAEPTYRS) is domain II. Residues 131–347 (NVNVKHTFDN…GALNRVIANA (217 aa)) are domain III, AAA+ region. The ATP site is built by Gly175, Gly177, Lys178, and Thr179. The interval 348-467 (NFTGRAITID…FSNLIRTLSS (120 aa)) is domain IV, binds dsDNA.

Belongs to the DnaA family. In terms of assembly, oligomerizes as a right-handed, spiral filament on DNA at oriC.

The protein resides in the cytoplasm. Functionally, plays an essential role in the initiation and regulation of chromosomal replication. ATP-DnaA binds to the origin of replication (oriC) to initiate formation of the DNA replication initiation complex once per cell cycle. Binds the DnaA box (a 9 base pair repeat at the origin) and separates the double-stranded (ds)DNA. Forms a right-handed helical filament on oriC DNA; dsDNA binds to the exterior of the filament while single-stranded (ss)DNA is stabiized in the filament's interior. The ATP-DnaA-oriC complex binds and stabilizes one strand of the AT-rich DNA unwinding element (DUE), permitting loading of DNA polymerase. After initiation quickly degrades to an ADP-DnaA complex that is not apt for DNA replication. Binds acidic phospholipids. This Shigella dysenteriae serotype 1 (strain Sd197) protein is Chromosomal replication initiator protein DnaA.